A 275-amino-acid chain; its full sequence is Hemin import ATP-binding protein HmuV (275 aa).

Residues 2–242 form the ABC transporter domain; sequence LKAAGIGVRL…EWIETGFGLQ (241 aa). Position 34-41 (34-41) interacts with ATP; that stretch reads GPNGAGKS.

It belongs to the ABC transporter superfamily. Heme (hemin) importer (TC 3.A.1.14.5) family. As to quaternary structure, the complex is composed of two ATP-binding proteins (HmuV), two transmembrane proteins (HmuU) and a solute-binding protein (HmuT).

It localises to the cell inner membrane. In terms of biological role, part of the ABC transporter complex HmuTUV involved in hemin import. Responsible for energy coupling to the transport system. In Gloeobacter violaceus (strain ATCC 29082 / PCC 7421), this protein is Hemin import ATP-binding protein HmuV.